Reading from the N-terminus, the 162-residue chain is Beta-lactoglobulin-1 (162 aa).

2 disulfide bridges follow: cysteine 66-cysteine 160 and cysteine 106-cysteine 119.

The protein belongs to the calycin superfamily. Lipocalin family. Monomer. As to expression, synthesized in mammary gland and secreted in milk.

The protein resides in the secreted. Primary component of whey, it binds retinol and is probably involved in the transport of that molecule. The polypeptide is Beta-lactoglobulin-1 (LGB1) (Equus asinus (Donkey)).